The following is a 416-amino-acid chain: Histidine--tRNA ligase (416 aa).

This sequence belongs to the class-II aminoacyl-tRNA synthetase family. In terms of assembly, homodimer.

The protein resides in the cytoplasm. The catalysed reaction is tRNA(His) + L-histidine + ATP = L-histidyl-tRNA(His) + AMP + diphosphate + H(+). This chain is Histidine--tRNA ligase, found in Clostridium novyi (strain NT).